The primary structure comprises 266 residues: Translation initiation factor 2 subunit alpha (266 aa).

In terms of domain architecture, S1 motif spans 12–83; that stretch reads GEILIATVKQ…RKGTVDVSLK (72 aa).

The protein belongs to the eIF-2-alpha family. As to quaternary structure, heterotrimer composed of an alpha, a beta and a gamma chain.

Functionally, eIF-2 functions in the early steps of protein synthesis by forming a ternary complex with GTP and initiator tRNA. The polypeptide is Translation initiation factor 2 subunit alpha (Saccharolobus solfataricus (strain ATCC 35092 / DSM 1617 / JCM 11322 / P2) (Sulfolobus solfataricus)).